Here is a 258-residue protein sequence, read N- to C-terminus: Ribonuclease HII (258 aa).

The RNase H type-2 domain maps to 71-258 (QLIAGIDEVG…PIKTMVNFKS (188 aa)). 3 residues coordinate a divalent metal cation: Asp-77, Glu-78, and Asp-169.

It belongs to the RNase HII family. Mn(2+) serves as cofactor. Mg(2+) is required as a cofactor.

The protein resides in the cytoplasm. It catalyses the reaction Endonucleolytic cleavage to 5'-phosphomonoester.. Its function is as follows. Endonuclease that specifically degrades the RNA of RNA-DNA hybrids. The chain is Ribonuclease HII (rnhB) from Lactococcus lactis subsp. lactis (strain IL1403) (Streptococcus lactis).